Reading from the N-terminus, the 578-residue chain is MGKGTDKLYITHSEWSSADAFSPSIGAGASRNQQATASFRRLPFNFCAASLQPFKNPVCTPDGTIFDVEVIGVWLEKHPNQNPVTGEPLQKKDLIRLNFARNSESDSLGAGLSDGKGDLIDPVTYKVFTDNTHIVAIRHGTYANVFAWDTVDRMNIKAKSWRDLVDDEEFTRADIITLQDPQNAASRDLNQFKFLKEGHEAQLTKEQEEERNAGNINAGALGSMGEKVSRAKAAVEKARKAREQGGDVNRSSTALTKPTGAGTVVRQSMINDKKLAVNSATYTTGKAAASFTSTGLTPETSGERALLSDEEYMLKPKRVKATGFARMETNMGDLTIELYPEFAPKAVWNFIKLSQTGYYKGVAFHRNIPNFMIQGGDPSGSGRGGQSVWGKYFDDEFDGPMTHNGRGTLSMANKGKNTNSSQFFFAYKPTPHLDRKHTVFGKVVENINVLSKMENVPTDGSNRPLNKILIKDIVILLDPFAEFQKQKQANELQTKEREKIRLQGGTDDDKTTWTGKRIRSDGSMENTGAGESVGKYLKTTTQQSTPTVNEADLEDVDTWEEPVRKKAKGGGFGNFDNW.

One can recognise a U-box domain in the interval 40 to 114; it reads RRLPFNFCAA…SDSLGAGLSD (75 aa). A disordered region spans residues 240–260; the sequence is KAREQGGDVNRSSTALTKPTG. The PPIase cyclophilin-type domain occupies 321-475; that stretch reads ATGFARMETN…NKILIKDIVI (155 aa). The segment at 505-578 is disordered; sequence GTDDDKTTWT…GGGFGNFDNW (74 aa). Over residues 538-548 the composition is skewed to polar residues; it reads KTTTQQSTPTV. Positions 551-560 are enriched in acidic residues; it reads ADLEDVDTWE. Positions 569-578 are enriched in gly residues; that stretch reads GGGFGNFDNW.

It belongs to the cyclophilin-type PPIase family. PPIL2 subfamily.

The protein localises to the nucleus. It carries out the reaction [protein]-peptidylproline (omega=180) = [protein]-peptidylproline (omega=0). The catalysed reaction is S-ubiquitinyl-[E2 ubiquitin-conjugating enzyme]-L-cysteine + [acceptor protein]-L-lysine = [E2 ubiquitin-conjugating enzyme]-L-cysteine + N(6)-ubiquitinyl-[acceptor protein]-L-lysine.. It functions in the pathway protein modification; protein ubiquitination. Functionally, may catalyze the cis-trans isomerization of proline imidic peptide bonds in oligopeptides thereby assisting the folding of proteins. May also function as a chaperone, playing a role in intracellular transport of proteins. May also have a protein ubiquitin ligase activity acting as an E3 ubiquitin protein ligase or as a ubiquitin-ubiquitin ligase promoting elongation of ubiquitin chains on proteins. The sequence is that of Peptidyl-prolyl cis-trans isomerase-like 2 (CYP8) from Gibberella zeae (strain ATCC MYA-4620 / CBS 123657 / FGSC 9075 / NRRL 31084 / PH-1) (Wheat head blight fungus).